Here is a 20-residue protein sequence, read N- to C-terminus: Protein PR-L2 (20 aa).

The segment at 1–20 (SVFAFENEQSSTIAPARLYK) is disordered.

This sequence belongs to the BetVI family.

The polypeptide is Protein PR-L2 (Lupinus luteus (European yellow lupine)).